The sequence spans 315 residues: uncharacterized protein (315 aa).

Over residues 1–23 the composition is skewed to polar residues; the sequence is MSNTDALNTANTQITENVDTSSM. The segment at 1–31 is disordered; the sequence is MSNTDALNTANTQITENVDTSSMKVEKTHDS.

This is an uncharacterized protein from Acanthamoeba polyphaga mimivirus (APMV).